The chain runs to 667 residues: DNA ligase (667 aa).

Residues 34–38 (DAEYD), 83–84 (SL), and Glu-113 each bind NAD(+). The active-site N6-AMP-lysine intermediate is Lys-115. NAD(+)-binding residues include Arg-136, Glu-170, Lys-286, and Lys-310. Cys-404, Cys-407, Cys-422, and Cys-427 together coordinate Zn(2+). Residues 589–667 (ATDSVLSGKT…EQQLEDVVGK (79 aa)) form the BRCT domain.

It belongs to the NAD-dependent DNA ligase family. LigA subfamily. It depends on Mg(2+) as a cofactor. Mn(2+) is required as a cofactor.

It carries out the reaction NAD(+) + (deoxyribonucleotide)n-3'-hydroxyl + 5'-phospho-(deoxyribonucleotide)m = (deoxyribonucleotide)n+m + AMP + beta-nicotinamide D-nucleotide.. In terms of biological role, DNA ligase that catalyzes the formation of phosphodiester linkages between 5'-phosphoryl and 3'-hydroxyl groups in double-stranded DNA using NAD as a coenzyme and as the energy source for the reaction. It is essential for DNA replication and repair of damaged DNA. In Oceanobacillus iheyensis (strain DSM 14371 / CIP 107618 / JCM 11309 / KCTC 3954 / HTE831), this protein is DNA ligase.